The sequence spans 435 residues: Nuclear receptor subfamily 6 group A member 1 (435 aa).

Positions 11–86 (QRACLICGDR…MGMNRKAIRE (76 aa)) form a DNA-binding region, nuclear receptor. 2 NR C4-type zinc fingers span residues 14-34 (CLICGDRATGLHYGIISCEGC) and 50-69 (CSRDKNCVMSRKQRNRCQYC). The tract at residues 84–158 (IREDGMPGGR…STPSSSRSME (75 aa)) is disordered. Positions 121–141 (NTSWSNNGDSDHSSPGNAVSE) are enriched in polar residues. Residues 142–156 (SNQPSPVSTPSSSRS) show a composition bias toward low complexity. An NR LBD domain is found at 204–435 (QSHTLINQLL…HSCKTIVTKE (232 aa)).

The protein belongs to the nuclear hormone receptor family. NR6 subfamily. As to quaternary structure, homodimer. Transiently expressed in differentiating cells of all embryonic germ layers. Expressed in an anterior to posterior concentration gradient from late gastrula to midneurula stages. Shows a complicated spatio-temporal pattern of expression during neurulation, being predominant in the neural plate and neural crest in midneurula embryos. At late tailbud (stage 30), mainly expressed in the head mesenchyme, gill arches and tail tip. Expression persists in the epidermis, somites and endoderm, and in the central nervous system, expression is restricted to the midbrain, hindbrain and part of the spinal cord. Isoforms Oo and Em are both expressed in the brain and isoform Oo is expressed in the germ cells of both the adult testis and ovary.

Its subcellular location is the cytoplasm. The protein resides in the nucleus. Its function is as follows. Probable orphan nuclear receptor. Binds to a response element containing repeats of the motif 5'-AGGTCA-3'. Required for anterior-posterior patterning during organogenesis. Acts with chordin to play a role in patterning the midbrain-hindbrain. Isoform Em is required for integrin-mediated cell matrix interaction during neurulation and for the morphogenetic movements leading to formation of the neural tube. Also mediates the effect of retinoic acid on primary neurogenesis. The sequence is that of Nuclear receptor subfamily 6 group A member 1 from Xenopus laevis (African clawed frog).